A 321-amino-acid polypeptide reads, in one-letter code: Aldose reductase C (321 aa).

22–31 (GNQIPSIGLG) contributes to the NADP(+) binding site. Tyrosine 62 acts as the Proton donor in catalysis. A substrate-binding site is contributed by histidine 124. 227 to 281 (SPLGQGKCDFFSNKILKSIAGKYKKSVANVIFKWLNQRGIAAIPKSGNHSRIIEN) is a binding site for NADP(+).

This sequence belongs to the aldo/keto reductase family.

The catalysed reaction is an alditol + NAD(+) = an aldose + NADH + H(+). It carries out the reaction an alditol + NADP(+) = an aldose + NADPH + H(+). Catalyzes the NADPH-dependent reduction of a wide variety of carbonyl-containing compounds to their corresponding alcohols with a broad range of catalytic efficiencies. The polypeptide is Aldose reductase C (alrC) (Dictyostelium discoideum (Social amoeba)).